The primary structure comprises 214 residues: Thymidylate kinase (214 aa).

ATP is bound at residue 10-17 (GPDGAGKT).

The protein belongs to the thymidylate kinase family.

The enzyme catalyses dTMP + ATP = dTDP + ADP. Phosphorylation of dTMP to form dTDP in both de novo and salvage pathways of dTTP synthesis. In Levilactobacillus brevis (strain ATCC 367 / BCRC 12310 / CIP 105137 / JCM 1170 / LMG 11437 / NCIMB 947 / NCTC 947) (Lactobacillus brevis), this protein is Thymidylate kinase.